The following is a 406-amino-acid chain: Multifunctional CCA protein (406 aa).

2 residues coordinate ATP: Gly8 and Arg11. The CTP site is built by Gly8 and Arg11. Mg(2+) contacts are provided by Asp21 and Asp23. ATP contacts are provided by Arg91, Arg137, and Arg140. The CTP site is built by Arg91, Arg137, and Arg140. An HD domain is found at 228-329; that stretch reads TGIHTLMVAE…IKILNKFDVW (102 aa).

Belongs to the tRNA nucleotidyltransferase/poly(A) polymerase family. Bacterial CCA-adding enzyme type 1 subfamily. Monomer. Can also form homodimers and oligomers. The cofactor is Mg(2+). Requires Ni(2+) as cofactor.

The enzyme catalyses a tRNA precursor + 2 CTP + ATP = a tRNA with a 3' CCA end + 3 diphosphate. It carries out the reaction a tRNA with a 3' CCA end + 2 CTP + ATP = a tRNA with a 3' CCACCA end + 3 diphosphate. Functionally, catalyzes the addition and repair of the essential 3'-terminal CCA sequence in tRNAs without using a nucleic acid template. Adds these three nucleotides in the order of C, C, and A to the tRNA nucleotide-73, using CTP and ATP as substrates and producing inorganic pyrophosphate. tRNA 3'-terminal CCA addition is required both for tRNA processing and repair. Also involved in tRNA surveillance by mediating tandem CCA addition to generate a CCACCA at the 3' terminus of unstable tRNAs. While stable tRNAs receive only 3'-terminal CCA, unstable tRNAs are marked with CCACCA and rapidly degraded. The polypeptide is Multifunctional CCA protein (Vibrio parahaemolyticus serotype O3:K6 (strain RIMD 2210633)).